The primary structure comprises 131 residues: Small ribosomal subunit protein uS11 (131 aa).

Belongs to the universal ribosomal protein uS11 family. In terms of assembly, part of the 30S ribosomal subunit. Interacts with proteins S7 and S18. Binds to IF-3.

In terms of biological role, located on the platform of the 30S subunit, it bridges several disparate RNA helices of the 16S rRNA. Forms part of the Shine-Dalgarno cleft in the 70S ribosome. The chain is Small ribosomal subunit protein uS11 from Saccharophagus degradans (strain 2-40 / ATCC 43961 / DSM 17024).